The sequence spans 610 residues: MGLKAAQKTLFPLRSIDDVVRLFAAELGREEPDLVLLSLVLGFVEHFLAVNRVIPTNVPELTFQPSPAPDPPGGLTYFPVADLSIIAALYARFTAQIRGAVDLSLYPREGGVSSRELVKKVSDVIWNSLSRSYFKDRAHIQSLFSFITGTKLDSSGVAFAVVGACQALGLRDVHLALSEDHAWVVFGSNGEQTAEVTWHGKGNEDRRGQTVNAGVAERSWLYLKGSYMRCDRKMEVAFMVCAINPSIDLHTDSLELLQLQQKLLWLLYDLGHLERYPMALGNLADLEELEPTPGRPDPLTLYHKGIASAKTYYQDEHIYPYMYLAGYHCRNRNVREALQAWADTATVIQDYNYCREDEEIYKEFFEVANDVIPNLLKEAASLLEAGEERPGEQAQGTQGQGSALQDPECFAHLLRFYDGICKWEEGSPTPVLHVGWATFLVQSLGRFEGQVRQKVHIVSREAEAAEAEEPWGDEAREGRRRGPRRESKPEEPPPPKKPALDKGPGSGQSAGSGPPRKTSGTVSGTARGTEVSSAAQAPAPAASPPPEGPVLTFQSEKMKGMKELLVATKINSSAIKLQLTAQSQVQMKKQKVSTPSDYTLSFLKRQRKGL.

Residues 214-390 form an interaction with FANCD2 region; the sequence is GVAERSWLYL…SLLEAGEERP (177 aa). Positions 460–552 are disordered; that stretch reads REAEAAEAEE…SPPPEGPVLT (93 aa). Residues 484–500 show a composition bias toward basic and acidic residues; sequence RRESKPEEPPPPKKPAL. Residues Ser487 and Ser543 each carry the phosphoserine modification. A Phosphothreonine modification is found at Thr594.

Component of the MLL-HCF complex, at least composed of KMT2A/MLL1, MEN1, ASH2L, RBBP5, DPY30, WDR5, HCFC1 and HCFC2. Component of the menin-associated histone methyltransferase complex, at least composed of KMT2B/MLL4, MEN1, ASH2L, RBBP5, DPY30 and WDR5. Interacts with POLR2B. Interacts with POLR2A phosphorylated at 'Ser-5', but not with the unphosphorylated, nor 'Ser-2' phosphorylated POLR2A forms. Interacts with FANCD2 and DBF4. Interacts with SMAD3, but not with SMAD2, nor SMAD4. Directly interacts with NFKB1, NFKB2 and RELA. Interacts with JUND (via MBM motif); inhibits the interaction of JUND with MAPK10 and the phosphorylation of JUND by MAP kinases MAPK8 and MAPK10. Interacts with KMT2A (via MBM motif). The KMT2A-MEN1 complex interacts with PSIP1 with a greater affinity as MEN1 enhances interaction of KMT2A with PSIP1. As to expression, widely expressed, including in the pituitary, brain, large intestine, spleen, kidney, adrenal gland, ovary, testis, thymus, lung, epididymis, bone marrow, pancreatic islets and placenta.

The protein resides in the nucleus. Functionally, essential component of a MLL/SET1 histone methyltransferase (HMT) complex, a complex that specifically methylates 'Lys-4' of histone H3 (H3K4). Functions as a transcriptional regulator. Binds to the TERT promoter and represses telomerase expression. Represses JUND-mediated transcriptional activation on AP1 sites, as well as that mediated by NFKB subunit RELA. Positively regulates HOXC8 and HOXC6 gene expression. May be involved in normal hematopoiesis through the activation of HOXA9 expression. May be involved in DNA repair. Plays a role in TGFB1-mediated inhibition of cell-proliferation, possibly regulating SMAD3 transcriptional activity. This chain is Menin (Men1), found in Rattus norvegicus (Rat).